The chain runs to 112 residues: Thioredoxin (112 aa).

The 111-residue stretch at Ser-2–Leu-112 folds into the Thioredoxin domain. Cys-35 and Cys-38 are joined by a disulfide.

The protein belongs to the thioredoxin family.

Its function is as follows. Participates in various redox reactions through the reversible oxidation of its active center dithiol to a disulfide and catalyzes dithiol-disulfide exchange reactions. The chain is Thioredoxin (trxA) from Mycolicibacterium smegmatis (Mycobacterium smegmatis).